The following is a 376-amino-acid chain: Neuropeptide receptor 3 (376 aa).

Topologically, residues 1–29 (MEGGRNCVMTVQQWQPEYNDMNQIRAIFS) are extracellular. The chain crosses the membrane as a helical span at residues 30 to 50 (LLYLLVWVGAIVGNTLVLYVL). Residues 51–66 (TFNQVSLSVRTVFVGC) lie on the Cytoplasmic side of the membrane. Residues 67 to 87 (LAGSDLLMCLFSLPITAISIF) form a helical membrane-spanning segment. At 88-89 (SR) the chain is on the extracellular side. Residues 90–110 (VWVFPAIFCKLIGVFQGGTIF) traverse the membrane as a helical segment. A disulfide bond links Cys98 and Cys175. The Cytoplasmic portion of the chain corresponds to 111-139 (VSSFTLTVIALDRCVLILRPNQEIVNFPR). The chain crosses the membrane as a helical span at residues 140-160 (AVFIVFCIWLLGYSLALPVGI). At 161-197 (YSDIAVYDEICGTFCEENWPDFNPDTGRSGIRRAYGL) the chain is on the extracellular side. Residues 198–218 (SVLVLQFGIPALISSICYWMI) form a helical membrane-spanning segment. At 219-251 (SRVMSDQLARRRGHNIRPESETKLVNRKTRANR) the chain is on the cytoplasmic side. A helical membrane pass occupies residues 252-272 (MMIVMVVGFVLAWMPFNAVNL). Topologically, residues 273 to 284 (YRDLFGISKWYS) are extracellular. The chain crosses the membrane as a helical span at residues 285-305 (TVFALCHVCAMCSAVLNPIIY). Residues 306-376 (SWFNPQFRQS…NDYRAGDQLL (71 aa)) lie on the Cytoplasmic side of the membrane.

This sequence belongs to the G-protein coupled receptor 1 family.

The protein localises to the cell membrane. Functionally, G-protein coupled receptor for flp-15 neuropeptides. Receptor activation assays suggest binding to predicted flp-15 peptides, GGPQGPLRF-NH2 and RGPSGPLRF-NH2. Likely involved in Gi/Go-coupled signaling pathways. This chain is Neuropeptide receptor 3, found in Caenorhabditis elegans.